The chain runs to 404 residues: Argininosuccinate synthase (404 aa).

Residues 12 to 20 (AYSGGLDTS) and A39 contribute to the ATP site. Residues Y90 and S95 each coordinate L-citrulline. G120 serves as a coordination point for ATP. L-aspartate contacts are provided by T122, N126, and D127. N126 serves as a coordination point for L-citrulline. Positions 130, 181, 190, 266, and 278 each coordinate L-citrulline.

The protein belongs to the argininosuccinate synthase family. Type 1 subfamily. Homotetramer.

The protein resides in the cytoplasm. It catalyses the reaction L-citrulline + L-aspartate + ATP = 2-(N(omega)-L-arginino)succinate + AMP + diphosphate + H(+). It participates in amino-acid biosynthesis; L-arginine biosynthesis; L-arginine from L-ornithine and carbamoyl phosphate: step 2/3. The sequence is that of Argininosuccinate synthase from Rhodospirillum rubrum (strain ATCC 11170 / ATH 1.1.1 / DSM 467 / LMG 4362 / NCIMB 8255 / S1).